We begin with the raw amino-acid sequence, 392 residues long: NADH-quinone oxidoreductase subunit D (392 aa).

Belongs to the complex I 49 kDa subunit family. As to quaternary structure, NDH-1 is composed of 14 different subunits. Subunits NuoB, C, D, E, F, and G constitute the peripheral sector of the complex.

The protein localises to the cell inner membrane. It carries out the reaction a quinone + NADH + 5 H(+)(in) = a quinol + NAD(+) + 4 H(+)(out). NDH-1 shuttles electrons from NADH, via FMN and iron-sulfur (Fe-S) centers, to quinones in the respiratory chain. The immediate electron acceptor for the enzyme in this species is believed to be ubiquinone. Couples the redox reaction to proton translocation (for every two electrons transferred, four hydrogen ions are translocated across the cytoplasmic membrane), and thus conserves the redox energy in a proton gradient. In Parvibaculum lavamentivorans (strain DS-1 / DSM 13023 / NCIMB 13966), this protein is NADH-quinone oxidoreductase subunit D.